We begin with the raw amino-acid sequence, 189 residues long: UPF0312 protein VV2_0231 (189 aa).

The N-terminal stretch at 1-22 is a signal peptide; it reads MRKSVIATGLALMMAVPFAANA.

It belongs to the UPF0312 family. Type 1 subfamily.

It localises to the periplasm. The sequence is that of UPF0312 protein VV2_0231 from Vibrio vulnificus (strain CMCP6).